Consider the following 95-residue polypeptide: Aspartyl/glutamyl-tRNA(Asn/Gln) amidotransferase subunit C (95 aa).

It belongs to the GatC family. As to quaternary structure, heterotrimer of A, B and C subunits.

The catalysed reaction is L-glutamyl-tRNA(Gln) + L-glutamine + ATP + H2O = L-glutaminyl-tRNA(Gln) + L-glutamate + ADP + phosphate + H(+). It carries out the reaction L-aspartyl-tRNA(Asn) + L-glutamine + ATP + H2O = L-asparaginyl-tRNA(Asn) + L-glutamate + ADP + phosphate + 2 H(+). Functionally, allows the formation of correctly charged Asn-tRNA(Asn) or Gln-tRNA(Gln) through the transamidation of misacylated Asp-tRNA(Asn) or Glu-tRNA(Gln) in organisms which lack either or both of asparaginyl-tRNA or glutaminyl-tRNA synthetases. The reaction takes place in the presence of glutamine and ATP through an activated phospho-Asp-tRNA(Asn) or phospho-Glu-tRNA(Gln). The polypeptide is Aspartyl/glutamyl-tRNA(Asn/Gln) amidotransferase subunit C (Brucella melitensis biotype 2 (strain ATCC 23457)).